Consider the following 246-residue polypeptide: Probable transcriptional regulatory protein CGSHiEE_01480 (246 aa).

It belongs to the TACO1 family.

The protein localises to the cytoplasm. The polypeptide is Probable transcriptional regulatory protein CGSHiEE_01480 (Haemophilus influenzae (strain PittEE)).